The sequence spans 287 residues: tRNA pseudouridine synthase B (287 aa).

Asp38 acts as the Nucleophile in catalysis.

The protein belongs to the pseudouridine synthase TruB family. Type 1 subfamily.

The enzyme catalyses uridine(55) in tRNA = pseudouridine(55) in tRNA. In terms of biological role, responsible for synthesis of pseudouridine from uracil-55 in the psi GC loop of transfer RNAs. The sequence is that of tRNA pseudouridine synthase B from Fusobacterium nucleatum subsp. nucleatum (strain ATCC 25586 / DSM 15643 / BCRC 10681 / CIP 101130 / JCM 8532 / KCTC 2640 / LMG 13131 / VPI 4355).